We begin with the raw amino-acid sequence, 233 residues long: Uridylate kinase (233 aa).

Residues 8–11 (KLSG), Gly-51, and Arg-55 contribute to the ATP site. UMP contacts are provided by residues Asp-68 and 129–136 (TSNPFFTT). Thr-156, Tyr-162, and Asp-165 together coordinate ATP.

This sequence belongs to the UMP kinase family. In terms of assembly, homohexamer.

It is found in the cytoplasm. It carries out the reaction UMP + ATP = UDP + ADP. It participates in pyrimidine metabolism; CTP biosynthesis via de novo pathway; UDP from UMP (UMPK route): step 1/1. With respect to regulation, inhibited by UTP. In terms of biological role, catalyzes the reversible phosphorylation of UMP to UDP. This chain is Uridylate kinase, found in Thermosipho melanesiensis (strain DSM 12029 / CIP 104789 / BI429).